The primary structure comprises 489 residues: Rhamnulokinase (489 aa).

Ala-13 to Arg-17 contributes to the ATP binding site. A disulfide bond links Cys-68 and Cys-222. Residues Gly-83 and His-236–Thr-238 each bind substrate. The active-site Proton acceptor is Asp-237. Thr-259 contacts ATP. Asn-296 provides a ligand contact to substrate. Gln-304 is a binding site for ATP. A disulfide bond links Cys-353 and Cys-370. Gly-402 lines the ATP pocket. A disulfide bridge links Cys-413 with Cys-417.

It belongs to the rhamnulokinase family. In terms of assembly, monomer. Requires Mg(2+) as cofactor.

It carries out the reaction L-rhamnulose + ATP = L-rhamnulose 1-phosphate + ADP + H(+). It participates in carbohydrate degradation; L-rhamnose degradation; glycerone phosphate from L-rhamnose: step 2/3. In terms of biological role, involved in the catabolism of L-rhamnose (6-deoxy-L-mannose). Catalyzes the transfer of the gamma-phosphate group from ATP to the 1-hydroxyl group of L-rhamnulose to yield L-rhamnulose 1-phosphate. This is Rhamnulokinase from Escherichia coli (strain 55989 / EAEC).